Reading from the N-terminus, the 269-residue chain is Formamidopyrimidine-DNA glycosylase (269 aa).

P2 (schiff-base intermediate with DNA) is an active-site residue. Catalysis depends on E3, which acts as the Proton donor. The Proton donor; for beta-elimination activity role is filled by K57. The DNA site is built by H90, R109, and K150. The FPG-type zinc-finger motif lies at 235–269 (QVYGRKGEPCRVCGTPIVATKHAQRATFYCRQCQK). The active-site Proton donor; for delta-elimination activity is R259.

Belongs to the FPG family. In terms of assembly, monomer. It depends on Zn(2+) as a cofactor.

It catalyses the reaction Hydrolysis of DNA containing ring-opened 7-methylguanine residues, releasing 2,6-diamino-4-hydroxy-5-(N-methyl)formamidopyrimidine.. It carries out the reaction 2'-deoxyribonucleotide-(2'-deoxyribose 5'-phosphate)-2'-deoxyribonucleotide-DNA = a 3'-end 2'-deoxyribonucleotide-(2,3-dehydro-2,3-deoxyribose 5'-phosphate)-DNA + a 5'-end 5'-phospho-2'-deoxyribonucleoside-DNA + H(+). Functionally, involved in base excision repair of DNA damaged by oxidation or by mutagenic agents. Acts as a DNA glycosylase that recognizes and removes damaged bases. Has a preference for oxidized purines, such as 7,8-dihydro-8-oxoguanine (8-oxoG). Has AP (apurinic/apyrimidinic) lyase activity and introduces nicks in the DNA strand. Cleaves the DNA backbone by beta-delta elimination to generate a single-strand break at the site of the removed base with both 3'- and 5'-phosphates. This Shigella dysenteriae serotype 1 (strain Sd197) protein is Formamidopyrimidine-DNA glycosylase.